Here is a 210-residue protein sequence, read N- to C-terminus: Glutathione S-transferase P (210 aa).

A GST N-terminal domain is found at 2–81; it reads PPYTIVYFPV…HLGRSLGLYG (80 aa). Phosphotyrosine; by EGFR is present on Tyr-4. Residues Tyr-8, Arg-14, Trp-39, Lys-45, and 52–53 contribute to the glutathione site; that span reads QL. Thr-62 carries the phosphothreonine modification. Residue 65–66 participates in glutathione binding; sequence QS. Positions 83–204 constitute a GST C-terminal domain; sequence DQREAALVDM…SSPDHVNRPI (122 aa). 2 positions are modified to N6-succinyllysine: Lys-103 and Lys-116. An N6-acetyllysine modification is found at Lys-128.

It belongs to the GST superfamily. Pi family. Homodimer. Interacts with CDK5.

Its subcellular location is the cytoplasm. The protein resides in the mitochondrion. It is found in the nucleus. It catalyses the reaction RX + glutathione = an S-substituted glutathione + a halide anion + H(+). The catalysed reaction is prostaglandin J2 + glutathione = prostaglandin J2-S-(R)-glutathione. It carries out the reaction prostaglandin J2 + glutathione = prostaglandin J2-S-(S)-glutathione. The enzyme catalyses prostaglandin A2 + glutathione = prostaglandin A2-S-(S)-glutathione. It catalyses the reaction 11(S)-hydroxy-14(S),15(S)-epoxy-(5Z,8Z,12E)-eicosatrienoate + glutathione = (11S,15S)-dihydroxy-14(R)-S-glutathionyl-(5Z,8Z,12E)-eicosatrienoate. In terms of biological role, conjugation of reduced glutathione to a wide number of exogenous and endogenous hydrophobic electrophiles. Involved in the formation of glutathione conjugates of both prostaglandin A2 (PGA2) and prostaglandin J2 (PGJ2). Participates in the formation of novel hepoxilin regioisomers. Negatively regulates CDK5 activity via p25/p35 translocation to prevent neurodegeneration. The polypeptide is Glutathione S-transferase P (GSTP1) (Cricetulus longicaudatus (Long-tailed dwarf hamster)).